A 263-amino-acid chain; its full sequence is Putative S-adenosyl-L-methionine-dependent methyltransferase Mjls_0079 (263 aa).

S-adenosyl-L-methionine is bound by residues Asp121 and 150–151; that span reads ES.

This sequence belongs to the UPF0677 family.

In terms of biological role, exhibits S-adenosyl-L-methionine-dependent methyltransferase activity. This is Putative S-adenosyl-L-methionine-dependent methyltransferase Mjls_0079 from Mycobacterium sp. (strain JLS).